A 348-amino-acid chain; its full sequence is Protein-glutamate methylesterase/protein-glutamine glutaminase 5 (348 aa).

Residues 8–125 enclose the Response regulatory domain; it reads RVLVVDDSAF…TERLYELGGE (118 aa). D59 carries the 4-aspartylphosphate modification. The region spanning 157–348 is the CheB-type methylesterase domain; it reads RAAAKSLVVV…MLALLRRHVR (192 aa). Catalysis depends on residues S169, H196, and D292.

The protein belongs to the CheB family. In terms of processing, phosphorylated by CheA. Phosphorylation of the N-terminal regulatory domain activates the methylesterase activity.

The protein localises to the cytoplasm. The enzyme catalyses [protein]-L-glutamate 5-O-methyl ester + H2O = L-glutamyl-[protein] + methanol + H(+). It catalyses the reaction L-glutaminyl-[protein] + H2O = L-glutamyl-[protein] + NH4(+). Functionally, involved in chemotaxis. Part of a chemotaxis signal transduction system that modulates chemotaxis in response to various stimuli. Catalyzes the demethylation of specific methylglutamate residues introduced into the chemoreceptors (methyl-accepting chemotaxis proteins or MCP) by CheR. Also mediates the irreversible deamidation of specific glutamine residues to glutamic acid. This is Protein-glutamate methylesterase/protein-glutamine glutaminase 5 from Myxococcus xanthus (strain DK1622).